A 331-amino-acid chain; its full sequence is 6-phosphogluconolactonase (331 aa).

The protein belongs to the cycloisomerase 2 family.

The catalysed reaction is 6-phospho-D-glucono-1,5-lactone + H2O = 6-phospho-D-gluconate + H(+). It participates in carbohydrate degradation; pentose phosphate pathway; D-ribulose 5-phosphate from D-glucose 6-phosphate (oxidative stage): step 2/3. Its function is as follows. Catalyzes the hydrolysis of 6-phosphogluconolactone to 6-phosphogluconate. The chain is 6-phosphogluconolactonase from Serratia proteamaculans (strain 568).